Consider the following 138-residue polypeptide: Large ribosomal subunit protein uL16 (138 aa).

Basic residues predominate over residues 1–17 (MLIPRKVKHRKQHHPRQ). The tract at residues 1-22 (MLIPRKVKHRKQHHPRQRGIAS) is disordered.

It belongs to the universal ribosomal protein uL16 family. In terms of assembly, part of the 50S ribosomal subunit.

Binds 23S rRNA and is also seen to make contacts with the A and possibly P site tRNAs. The chain is Large ribosomal subunit protein uL16 from Mycobacterium avium (strain 104).